Here is a 422-residue protein sequence, read N- to C-terminus: GPI mannosyltransferase 1 (422 aa).

A run of 8 helical transmembrane segments spans residues 10–30, 82–102, 162–182, 216–236, 282–302, 327–347, 352–372, and 385–405; these read TTPLFTISLLLRLGLLFYGIY, FPAFGKLVFAAADLLAGWLIL, IILGLSVHFKIYPFIYAPAIV, LKFGLLSLITFMILNLVMFAI, IESFAFLPQLLLSCVLIPLAL, SQYFLWYMIFLPLYLPNSSFL, LGIFALLLWIVSQAAWLQQGY, and GLWLASIAFFLVNCWILGVII.

Belongs to the PIGM family.

It localises to the endoplasmic reticulum membrane. It functions in the pathway glycolipid biosynthesis; glycosylphosphatidylinositol-anchor biosynthesis. In terms of biological role, mannosyltransferase involved in glycosylphosphatidylinositol-anchor biosynthesis. Transfers the first alpha-1,4-mannose to GlcN-acyl-PI during GPI precursor assembly. Required for cell wall integrity. This chain is GPI mannosyltransferase 1 (GPI14), found in Gibberella zeae (strain ATCC MYA-4620 / CBS 123657 / FGSC 9075 / NRRL 31084 / PH-1) (Wheat head blight fungus).